The chain runs to 1049 residues: MTIKEMPQPKTFGELKNLPLLNTDKPVQALMKIADELGEIFKFEAPGRVTRYLSSQRLIKEACDESRFDKNLSQALKFVRDFAGDGLFTSWTHEKNWKKAHNILLPSFSQQAMKGYHAMMVDIAVQLVQKWERLNADEHIEVPEDMTRLTLDTIGLCGFNYRFNSFYRDQPHPFITSMVRALDEAMNKLQRANPDDPAYDENKRQFQEDIKVMNDLVDKIIADRKASGEQSDDLLTHMLNGKDPETGEPLDDENIRYQIITFLIAGHETTSGLLSFALYFLVKNPHVLQKAAEEAARVLVDPVPSYKQVKQLKYVGMVLNEALRLWPTAPAFSLYAKEDTVLGGEYPLEKGDELMVLIPQLHRDKTIWGDDVEEFRPERFENPSAIPQHAFKPFGNGQRACIGQQFALHEATLVLGMMLKHFDFEDHTNYELDIKETLTLKPEGFVVKAKSKKIPLGGIPSPSTEQSAKKVRKKAENAHNTPLLVLYGSNMGTAEGTARDLADIAMSKGFAPQVATLDSHAGNLPREGAVLIVTASYNGHPPDNAKQFVDWLDQASADEVKGVRYSVFGCGDKNWATTYQKVPAFIDETLAAKGAENIADRGEADASDDFEGTYEEWREHMWSDVAAYFNLDIENSEDNKSTLSLQFVDSAADMPLAKMHGAFSTNVVASKELQQPGSARSTRHLEIELPKEASYQEGDHLGVIPRNYEGIVNRVTARFGLDASQQIRLEAEEEKLAHLPLAKTVSVEELLQYVELQDPVTRTQLRAMAAKTVCPPHKVELEALLEKQAYKEQVLAKRLTMLELLEKYPACEMKFSEFIALLPSIRPRYYSISSSPRVDEKQASITVSVVSGEAWSGYGEYKGIASNYLAELQEGDTITCFISTPQSEFTLPKDPETPLIMVGPGTGVAPFRGFVQARKQLKEQGQSLGEAHLYFGCRSPHEDYLYQEELENAQSEGIITLHTAFSRMPNQPKTYVQHVMEQDGKKLIELLDQGAHFYICGDGSQMAPAVEATLMKSYADVHQVSEADARLWLQQLEEKGRYAKDVWAG.

Residues 2-472 (TIKEMPQPKT…STEQSAKKVR (471 aa)) are cytochrome P450. Tyrosine 52 is a (9Z)-hexadecenoate binding site. Cysteine 401 contacts heme. Residues 473–1049 (KKAENAHNTP…GRYAKDVWAG (577 aa)) are NADPH--P450 reductase. Residues 483-622 (LLVLYGSNMG…TYEEWREHMW (140 aa)) enclose the Flavodoxin-like domain. FMN contacts are provided by residues 489–494 (SNMGTA), 536–539 (SYNG), 570–572 (CGD), and 578–580 (TYQ). The FAD-binding FR-type domain occupies 660–892 (HGAFSTNVVA…STPQSEFTLP (233 aa)).

In the N-terminal section; belongs to the cytochrome P450 family. The cofactor is FAD. Requires FMN as cofactor. It depends on heme as a cofactor.

It is found in the cytoplasm. The catalysed reaction is 2 oxidized [cytochrome P450] + NADPH = 2 reduced [cytochrome P450] + NADP(+) + H(+). It carries out the reaction an organic molecule + reduced [NADPH--hemoprotein reductase] + O2 = an alcohol + oxidized [NADPH--hemoprotein reductase] + H2O + H(+). Inhibited by N-(12-imidazolyl-dodecanoyl)-L-leucine. Functionally, functions as a fatty acid monooxygenase. Catalyzes hydroxylation of fatty acids at omega-1, omega-2 and omega-3 positions. Shows activity toward medium and long-chain fatty acids, with optimum chain lengths of 12, 14 and 16 carbons (lauric, myristic, and palmitic acids). Able to metabolize some of these primary metabolites to secondary and tertiary products. Marginal activity towards short chain lengths of 8-10 carbons. Hydroxylates highly branched fatty acids, which play an essential role in membrane fluidity regulation. Also displays a NADPH-dependent reductase activity in the C-terminal domain, which allows electron transfer from NADPH to the heme iron of the cytochrome P450 N-terminal domain. Involved in inactivation of quorum sensing signals of other competing bacteria by oxidazing efficiently acyl homoserine lactones (AHLs), molecules involved in quorum sensing signaling pathways, and their lactonolysis products acyl homoserines (AHs). The protein is Bifunctional cytochrome P450/NADPH--P450 reductase of Priestia megaterium (strain ATCC 14581 / DSM 32 / CCUG 1817 / JCM 2506 / NBRC 15308 / NCIMB 9376 / NCTC 10342 / NRRL B-14308 / VKM B-512 / Ford 19) (Bacillus megaterium).